Consider the following 732-residue polypeptide: Acylamino-acid-releasing enzyme (732 aa).

N-acetylmethionine is present on Met-1. Residues Ser-185 and Ser-187 each carry the phosphoserine modification. Catalysis depends on charge relay system residues Ser-587, Asp-675, and His-707.

This sequence belongs to the peptidase S9C family. As to quaternary structure, homotetramer.

It is found in the cytoplasm. It catalyses the reaction Cleavage of an N-acetyl or N-formyl amino acid from the N-terminus of a polypeptide.. With respect to regulation, homotetramerization is required for activity. Tetramerization results in the formation of a gated channel which is involved in substrate selection and substrate access to the catalytic sites. In terms of biological role, this enzyme catalyzes the hydrolysis of the N-terminal peptide bond of an N-acetylated peptide to generate an N-acetylated amino acid and a peptide with a free N-terminus. It preferentially cleaves off Ac-Ala, Ac-Met and Ac-Ser. Also, involved in the degradation of oxidized and glycated proteins. The protein is Acylamino-acid-releasing enzyme (Apeh) of Mus musculus (Mouse).